A 261-amino-acid chain; its full sequence is Chanoclavine-I dehydrogenase ifgE (261 aa).

A signal peptide spans 1 to 20; that stretch reads MASVKSRVFAITGGASGIGA. NADP(+) is bound by residues isoleucine 18, lysine 48, aspartate 66, arginine 132, tyrosine 166, lysine 170, and threonine 201. The active-site Proton acceptor is tyrosine 166. Residue lysine 170 is the Lowers pKa of active site Tyr of the active site.

The protein belongs to the short-chain dehydrogenases/reductases (SDR) family.

It functions in the pathway alkaloid biosynthesis; ergot alkaloid biosynthesis. In terms of biological role, chanoclavine-I dehydrogenase; part of the gene cluster that mediates the biosynthesis of isofumigaclavines, fungal ergot alkaloids. The tryptophan dimethylallyltransferase ifgA catalyzes the first step of ergot alkaloid biosynthesis by condensing dimethylallyl diphosphate (DMAP) and tryptophan to form 4-dimethylallyl-L-tryptophan. The second step is catalyzed by the methyltransferase ifgB that methylates 4-dimethylallyl-L-tryptophan in the presence of S-adenosyl-L-methionine, resulting in the formation of N-methyl-dimethylallyl-L-tryptophan. The catalase ifgD and the FAD-dependent oxidoreductase ifgC then transform N-methyl-dimethylallyl-L-tryptophan to chanoclavine-I which is further oxidized by ifgE in the presence of NAD(+), resulting in the formation of chanoclavine-I aldehyde. The chanoclavine-I aldehyde reductases ifgG and/or fgaOx3 reduce chanoclavine-I aldehyde to dihydrochanoclavine-I aldehyde that spontaneously dehydrates to form 6,8-dimethyl-6,7-didehydroergoline. The festuclavine dehydrogenases ifgF1 and/or ifgF2 then catalyze the reduction of 6,8-dimethyl-6,7-didehydroergoline to form festuclavine. Hydrolysis of festuclavine by a yet undetermined cytochrome P450 monooxygenase (called ifgH) then leads to the formation of isofumigaclavine B which is in turn acetylated by ifgI to isofumigaclavine A. Penicillium roqueforti has interestingly at least two sets of genes for the consumption of chanoclavine-I aldehyde on three different loci, the OYEs ifgG/fgaOx3 and the festuclavine synthase homologs ifgF1/ifgF2. The reason for the duplication of these genes is unclear, probably to ensure the conversion of chanoclavine-I aldehyde by differential gene expression under various environmental conditions. This is Chanoclavine-I dehydrogenase ifgE from Penicillium roqueforti (strain FM164).